A 187-amino-acid chain; its full sequence is Ribosome-recycling factor (187 aa).

The protein belongs to the RRF family.

The protein localises to the cytoplasm. Its function is as follows. Responsible for the release of ribosomes from messenger RNA at the termination of protein biosynthesis. May increase the efficiency of translation by recycling ribosomes from one round of translation to another. The chain is Ribosome-recycling factor from Parabacteroides distasonis (strain ATCC 8503 / DSM 20701 / CIP 104284 / JCM 5825 / NCTC 11152).